The sequence spans 295 residues: GTPase Era (295 aa).

Residues 7–176 form the Era-type G domain; sequence KTISVCIIGR…IKSKAKVSPW (170 aa). A G1 region spans residues 15 to 22; it reads GRPNSGKS. 15–22 contributes to the GTP binding site; sequence GRPNSGKS. The G2 stretch occupies residues 41-45; that stretch reads QTTRS. The tract at residues 62-65 is G3; that stretch reads DTPG. GTP is bound by residues 62–66 and 124–127; these read DTPGI and NKID. Positions 124-127 are G4; that stretch reads NKID. Residues 152-154 are G5; it reads ISA. In terms of domain architecture, KH type-2 spans 204–281; the sequence is LQQELPYKLT…HLFLFVKVHA (78 aa).

This sequence belongs to the TRAFAC class TrmE-Era-EngA-EngB-Septin-like GTPase superfamily. Era GTPase family. Monomer.

The protein resides in the cytoplasm. It is found in the cell inner membrane. An essential GTPase that binds both GDP and GTP, with rapid nucleotide exchange. Plays a role in 16S rRNA processing and 30S ribosomal subunit biogenesis and possibly also in cell cycle regulation and energy metabolism. In Rickettsia typhi (strain ATCC VR-144 / Wilmington), this protein is GTPase Era.